A 1428-amino-acid polypeptide reads, in one-letter code: MPRLKLPKSFKDELESEKTTTTSSRKKAPVVDPKQTLMSSFFTPVSKSTDTKEINNKEDKDEDKDKDKDNKKTKKSKDTSDNEDMVDDNNKQQKEKKATPNKSNSPQSPQTSKSPLTRRSSANGNSDSKIDNKEKEKEKEKEKEKDKSTPTKTTSSRVKKDTEVSKSIPPKLSKQTKKKQISSDNDIYDDEKDSEEEDLEDDHDDEEEKVVVKKPSKPTSKSITAKPASTKATTTTTTTTTTTSTGRTRVNRVNLDISFSSESEEDEKPKKKIIGKKRKKKDDSDFDSESESDTISEASEVEPESEEDLDSFKFNSKKKNNNKNNNNKKKNDEYEDEEEDEDDELFKDIEMKDKPEEEEKEEEGDPIVIGSGRVVLPKGTPDFQPDPKAGKKLLKAHLEIQSKEEAKRLQQANGGGGDGGGGQIKGSDDEDEEVKKPTKGGSKASAKKKGPAYTPLEQQYIAIKKENPDTVLMVECGYKYKFFGEDAEVANKVLNIYSYVAKNFLNCSIPTQRLFFHLRRLVMAGYKVGIVEQTETAALKAISSSKSQPFERKLTRVYTSSTFIDDDIDDQLTSSSPQFLVSFYESTPKNKNDDVIKKQRDNEEEGIDSSNESSTSTISFVAVSVKTGEIIYDTFKDNVMRSQLETILTHIKPSEILIPPTTTTVNKQKVNNGIGTNHYYFSNLTSKCLKTYTKSTNVRTQAMDSQLYDYEYSLGKLIDFYEDESNNNNNNNNCEDVLKFVKSTLNKEQIICLGILLSYLNEFIHFGSILKVESNFKAFRVSNHLVLPHSTIVNLELLVNESDNKEKGSLIWLMNRTSTFSGSRMFINWICKPLNQLELIKERQDAVEELVNGIKTNSPPIVSIISLFKSHIPDLQRNLSRIYYKVQCTPKEFLNTMTSLQRIVELFKEINNNNSSYKFNSTLLNSIFKLQNDNKDGDSDSFDYIGGEDKLSKRIKYFLSNINKETAKEYGTVGCDKSNLWVDLEKYEKIRETKEKIEQVEKEFKNVLKNIRKELSKPSLEYHHMPGLGLEYLLELPPSFKAVPKSWIKVNSTQKMARYHAPEVLEQLKILSQSRETLKIQSQESWISFLGEFSVDYSLFSNFVNKISNLDCLFSLAKVSSLEGYIRPQFVKEKKDGGIQIENGRHPVVEAILSGSDGSYVPNTIELRESACKSMIITGPNMGGKSSLLRQTALIVIMAQVGCFVPATSCSLSVFDAIYTRMGARDSIGTGKSTFFIELEETSDILKNSTQNTLVILDELGRGTSTNDGVAIAYSTLKYIVEVMKCYCLFVTHYPLLAQLELQYPTQVGNFHMGYLEEKQDQQLQKSVIPKVIFLYKLVKGAAQNSYGLNIARLAGLPMEVIADALKKSNEMKESITRRANLSDGKDQQQIENEIKSIIKNWNSNRTTLNSNDLLQFIEKFKSIQLKL.

Disordered regions lie at residues 1–391 (MPRL…KAGK), 405–451 (EAKR…KKGP), and 592–612 (NDDV…SSNE). Basic and acidic residues predominate over residues 9–18 (SFKDELESEK). Residues 36-48 (TLMSSFFTPVSKS) show a composition bias toward polar residues. Composition is skewed to basic and acidic residues over residues 49–80 (TDTK…KDTS) and 88–98 (DNNKQQKEKKA). The span at 100-125 (PNKSNSPQSPQTSKSPLTRRSSANGN) shows a compositional bias: polar residues. Residues 128–149 (SKIDNKEKEKEKEKEKEKDKST) show a composition bias toward basic and acidic residues. The segment covering 186–208 (DIYDDEKDSEEEDLEDDHDDEEE) has biased composition (acidic residues). A compositionally biased stretch (low complexity) spans 217-245 (KPTSKSITAKPASTKATTTTTTTTTTTST). Residues 270–280 (KKKIIGKKRKK) are compositionally biased toward basic residues. 2 stretches are compositionally biased toward acidic residues: residues 284–309 (SDFD…EEDL) and 333–345 (EYED…DDEL). Positions 346–357 (FKDIEMKDKPEE) are enriched in basic and acidic residues. Residues 413–424 (NGGGGDGGGGQI) are compositionally biased toward gly residues. Basic and acidic residues predominate over residues 592–601 (NDDVIKKQRD).

This sequence belongs to the DNA mismatch repair MutS family. MSH3 subfamily. As to quaternary structure, heterodimer consisting of msh2-msh3 (MutS beta). Forms a ternary complex with MutL alpha (mlh1-pms1). Interacts with exo1.

Its function is as follows. Component of the post-replicative DNA mismatch repair system (MMR). Heterodimerizes with msh2 to form MutS beta, which binds to DNA mismatches thereby initiating DNA repair. When bound, the MutS beta heterodimer bends the DNA helix and shields approximately 20 base pairs. MutS beta recognizes large insertion-deletion loops (IDL) up to 13 nucleotides long. After mismatch binding, forms a ternary complex with the MutL alpha heterodimer, which is thought to be responsible for directing the downstream MMR events, including strand discrimination, excision, and resynthesis. The protein is DNA mismatch repair protein Msh3 (msh3) of Dictyostelium discoideum (Social amoeba).